Here is a 75-residue protein sequence, read N- to C-terminus: MFTLKKPLLLLFFLGTISLSLCQEERDADEEEGEMIEEEVKRSLLGTVKDLLIGAGKSAAQSVLKGLSCKLSKDC.

An N-terminal signal peptide occupies residues Met-1–Cys-22. Positions Gln-23–Val-40 are excised as a propeptide. Cys-69 and Cys-75 are joined by a disulfide.

Belongs to the frog skin active peptide (FSAP) family. Brevinin subfamily. As to expression, expressed by the skin glands.

Its subcellular location is the secreted. Functionally, has antimicrobial activity against some Gram-positive bacteria and fungi but has no activity against a range of Gram-negative bacteria except P.faecalis. Has antimicrobial activity against the Gram-positive bacteria S.aureus ATCC 25923 (MIC=19 uM), B.licheniformis X39 (MIC=37.5 uM) and R.rhodochrous X15 (MIC=9.5 uM), is virtually inactive against E.faecium 091299 (MIC=150 uM) and S.carnosus KHS (MIC=150 uM) and inactive against E.faecalis 981. Active against the Gram-negative bacterium P.faecalis X29 (MIC=9.5 uM) and is inactive against E.coli, P.aeruginosa and S.typhi. Active against C.albicans ATCC 2002 (MIC=19 uM) and is also active against the slime mold 090223 (MIC=37.5 uM). Has extremely low hemolytic activity against human erythrocytes (LC(50)=300 uM). This Odorrana hainanensis (Odor frog) protein is Brevinin-2HS2A.